Here is a 91-residue protein sequence, read N- to C-terminus: PqqA binding protein (91 aa).

Belongs to the PqqD family. As to quaternary structure, monomer. Interacts with PqqE.

The protein operates within cofactor biosynthesis; pyrroloquinoline quinone biosynthesis. Functions as a PqqA binding protein and presents PqqA to PqqE, in the pyrroloquinoline quinone (PQQ) biosynthetic pathway. The chain is PqqA binding protein from Pseudomonas putida (strain W619).